Consider the following 466-residue polypeptide: Catalase ifgD (466 aa).

The disordered stretch occupies residues 1-22 (MAPNYAKKCPVMGKAPSSGHSS). His-48 is a catalytic residue. Tyr-337 contacts heme.

It belongs to the catalase family. The cofactor is heme.

It participates in alkaloid biosynthesis; ergot alkaloid biosynthesis. Its function is as follows. Catalase; part of the gene cluster that mediates the biosynthesis of isofumigaclavines, fungal ergot alkaloids. The tryptophan dimethylallyltransferase ifgA catalyzes the first step of ergot alkaloid biosynthesis by condensing dimethylallyl diphosphate (DMAP) and tryptophan to form 4-dimethylallyl-L-tryptophan. The second step is catalyzed by the methyltransferase ifgB that methylates 4-dimethylallyl-L-tryptophan in the presence of S-adenosyl-L-methionine, resulting in the formation of N-methyl-dimethylallyl-L-tryptophan. The catalase ifgD and the FAD-dependent oxidoreductase ifgC then transform N-methyl-dimethylallyl-L-tryptophan to chanoclavine-I which is further oxidized by ifgE in the presence of NAD(+), resulting in the formation of chanoclavine-I aldehyde. The chanoclavine-I aldehyde reductases ifgG and/or fgaOx3 reduce chanoclavine-I aldehyde to dihydrochanoclavine-I aldehyde that spontaneously dehydrates to form 6,8-dimethyl-6,7-didehydroergoline. The festuclavine dehydrogenases ifgF1 and/or ifgF2 then catalyze the reduction of 6,8-dimethyl-6,7-didehydroergoline to form festuclavine. Hydrolysis of festuclavine by a yet undetermined cytochrome P450 monooxygenase (called ifgH) then leads to the formation of isofumigaclavine B which is in turn acetylated by ifgI to isofumigaclavine A. Penicillium roqueforti has interestingly at least two sets of genes for the consumption of chanoclavine-I aldehyde on three different loci, the OYEs ifgG/fgaOx3 and the festuclavine synthase homologs ifgF1/ifgF2. The reason for the duplication of these genes is unclear, probably to ensure the conversion of chanoclavine-I aldehyde by differential gene expression under various environmental conditions. This chain is Catalase ifgD, found in Penicillium roqueforti (strain FM164).